The following is a 222-amino-acid chain: MKAAVITFPGSNCDRDLATAFEKAGADVTRVWHKDTALPEGVDVVGVPGGFSFGDYLRCGAIAARSPIAAAMIRHAERGGYVLGICNGFQVLTETGLLPGALMRNAGLKFICRRVDLRVATADSAFTSGWAAGDAVRFPIAHHDGNYTADPETLARLRGEDRVAFTYLDNPNGSMEDIAGILSANRRVLGLMPHPERAVEEAQGGADGMGLFRALLGGMALV.

In terms of domain architecture, Glutamine amidotransferase type-1 spans 2–222 (KAAVITFPGS…RALLGGMALV (221 aa)). Residue C86 is the Nucleophile of the active site. Active-site residues include H194 and E196.

As to quaternary structure, part of the FGAM synthase complex composed of 1 PurL, 1 PurQ and 2 PurS subunits.

The protein localises to the cytoplasm. It carries out the reaction N(2)-formyl-N(1)-(5-phospho-beta-D-ribosyl)glycinamide + L-glutamine + ATP + H2O = 2-formamido-N(1)-(5-O-phospho-beta-D-ribosyl)acetamidine + L-glutamate + ADP + phosphate + H(+). The enzyme catalyses L-glutamine + H2O = L-glutamate + NH4(+). It functions in the pathway purine metabolism; IMP biosynthesis via de novo pathway; 5-amino-1-(5-phospho-D-ribosyl)imidazole from N(2)-formyl-N(1)-(5-phospho-D-ribosyl)glycinamide: step 1/2. Part of the phosphoribosylformylglycinamidine synthase complex involved in the purines biosynthetic pathway. Catalyzes the ATP-dependent conversion of formylglycinamide ribonucleotide (FGAR) and glutamine to yield formylglycinamidine ribonucleotide (FGAM) and glutamate. The FGAM synthase complex is composed of three subunits. PurQ produces an ammonia molecule by converting glutamine to glutamate. PurL transfers the ammonia molecule to FGAR to form FGAM in an ATP-dependent manner. PurS interacts with PurQ and PurL and is thought to assist in the transfer of the ammonia molecule from PurQ to PurL. The sequence is that of Phosphoribosylformylglycinamidine synthase subunit PurQ from Cereibacter sphaeroides (strain ATCC 17023 / DSM 158 / JCM 6121 / CCUG 31486 / LMG 2827 / NBRC 12203 / NCIMB 8253 / ATH 2.4.1.) (Rhodobacter sphaeroides).